We begin with the raw amino-acid sequence, 406 residues long: Argininosuccinate synthase (406 aa).

8–16 (AYSGGLDTS) provides a ligand contact to ATP. Tyr-86 serves as a coordination point for L-citrulline. Gly-116 is a binding site for ATP. Thr-118, Asn-122, and Asp-123 together coordinate L-aspartate. Residue Asn-122 participates in L-citrulline binding. Arg-126, Ser-174, Ser-183, Glu-259, and Tyr-271 together coordinate L-citrulline.

Belongs to the argininosuccinate synthase family. Type 1 subfamily. As to quaternary structure, homotetramer.

The protein localises to the cytoplasm. The catalysed reaction is L-citrulline + L-aspartate + ATP = 2-(N(omega)-L-arginino)succinate + AMP + diphosphate + H(+). It functions in the pathway amino-acid biosynthesis; L-arginine biosynthesis; L-arginine from L-ornithine and carbamoyl phosphate: step 2/3. In Oenococcus oeni (strain ATCC BAA-331 / PSU-1), this protein is Argininosuccinate synthase.